The primary structure comprises 336 residues: MIRNEVKAFKPYRVIEGNYRIWLDKNESPYDLPEELKEEIFEELKSVPFNRYPHITSMPAREAIGEFYGLPAENVAVGKGGDELIGYLVRLFEGDYIVTTPPTFGMYSFYARLNGIPVIEVPLREDFTIDGDTIAEKAKKASAVFIASPNNPTGNLQPVEEVLKVLETGKAVVVDEAYVEFAGKDLLGLLDEYPNLVLLRTFSKAFSLAGARVGYALASEEIIEALYRIKSPFSVDIFAQAVVKVVLRHPGLFRERIREIVRERERVRRSLGELAYPSDANFLLVKADAHSFLLERGIVVRKLSGRLKGHIRVTIGRRENDAFLKAMEEWKDVAGL.

Lys204 carries the post-translational modification N6-(pyridoxal phosphate)lysine.

The protein belongs to the class-II pyridoxal-phosphate-dependent aminotransferase family. Histidinol-phosphate aminotransferase subfamily. Requires pyridoxal 5'-phosphate as cofactor.

It catalyses the reaction L-histidinol phosphate + 2-oxoglutarate = 3-(imidazol-4-yl)-2-oxopropyl phosphate + L-glutamate. It participates in amino-acid biosynthesis; L-histidine biosynthesis; L-histidine from 5-phospho-alpha-D-ribose 1-diphosphate: step 7/9. The chain is Histidinol-phosphate aminotransferase from Thermococcus kodakarensis (strain ATCC BAA-918 / JCM 12380 / KOD1) (Pyrococcus kodakaraensis (strain KOD1)).